Consider the following 235-residue polypeptide: MITYETWDIEQKPTFPIDNNEKGALHVLSWAYDHYSDDLLYACSFGIEGIVLIDLISQVRDDAEIVFLDTHLHFPETYETIERVKQAYPRLRIHLQTPSLSLAEQEKQFGAELWKTDPNKCCELRKIIPLRQAMTGKKAWISGLRREQSPTRQHVEFINLDKKFQNIKVCPLIHWTWKDVWRYVHRHNLSYNPLHDRGYPSIGCAPCTAPAYTEEDLRSGRWAGLGKTECGLHES.

[4Fe-4S] cluster is bound by residues cysteine 121, cysteine 122, cysteine 204, and cysteine 207. Catalysis depends on cysteine 230, which acts as the Nucleophile; cysteine thiosulfonate intermediate.

It belongs to the PAPS reductase family. CysH subfamily. Requires [4Fe-4S] cluster as cofactor.

The protein localises to the cytoplasm. It carries out the reaction [thioredoxin]-disulfide + sulfite + AMP + 2 H(+) = adenosine 5'-phosphosulfate + [thioredoxin]-dithiol. The protein operates within sulfur metabolism; hydrogen sulfide biosynthesis; sulfite from sulfate. Catalyzes the formation of sulfite from adenosine 5'-phosphosulfate (APS) using thioredoxin as an electron donor. The sequence is that of Adenosine 5'-phosphosulfate reductase from Anoxybacillus flavithermus (strain DSM 21510 / WK1).